We begin with the raw amino-acid sequence, 344 residues long: Dihydroorotase (344 aa).

Residues histidine 14 and histidine 16 each coordinate Zn(2+). Substrate is bound by residues 16-18 (HLR) and asparagine 42. Residues lysine 100, histidine 137, and histidine 175 each coordinate Zn(2+). Lysine 100 carries the post-translational modification N6-carboxylysine. Histidine 137 serves as a coordination point for substrate. Leucine 220 contacts substrate. Residue aspartate 248 participates in Zn(2+) binding. Residue aspartate 248 is part of the active site. Substrate contacts are provided by histidine 252 and alanine 264.

Belongs to the metallo-dependent hydrolases superfamily. DHOase family. Class II DHOase subfamily. As to quaternary structure, homodimer. It depends on Zn(2+) as a cofactor.

It catalyses the reaction (S)-dihydroorotate + H2O = N-carbamoyl-L-aspartate + H(+). The protein operates within pyrimidine metabolism; UMP biosynthesis via de novo pathway; (S)-dihydroorotate from bicarbonate: step 3/3. Catalyzes the reversible cyclization of carbamoyl aspartate to dihydroorotate. The protein is Dihydroorotase of Cupriavidus taiwanensis (strain DSM 17343 / BCRC 17206 / CCUG 44338 / CIP 107171 / LMG 19424 / R1) (Ralstonia taiwanensis (strain LMG 19424)).